The following is a 153-amino-acid chain: ATP synthase subunit b' (153 aa).

Residues 20–40 (TLPLMAVQVVLLTFILNALFF) traverse the membrane as a helical segment.

This sequence belongs to the ATPase B chain family. As to quaternary structure, F-type ATPases have 2 components, F(1) - the catalytic core - and F(0) - the membrane proton channel. F(1) has five subunits: alpha(3), beta(3), gamma(1), delta(1), epsilon(1). F(0) has four main subunits: a(1), b(1), b'(1) and c(10-14). The alpha and beta chains form an alternating ring which encloses part of the gamma chain. F(1) is attached to F(0) by a central stalk formed by the gamma and epsilon chains, while a peripheral stalk is formed by the delta, b and b' chains.

The protein localises to the cellular thylakoid membrane. Functionally, f(1)F(0) ATP synthase produces ATP from ADP in the presence of a proton or sodium gradient. F-type ATPases consist of two structural domains, F(1) containing the extramembraneous catalytic core and F(0) containing the membrane proton channel, linked together by a central stalk and a peripheral stalk. During catalysis, ATP synthesis in the catalytic domain of F(1) is coupled via a rotary mechanism of the central stalk subunits to proton translocation. Component of the F(0) channel, it forms part of the peripheral stalk, linking F(1) to F(0). The b'-subunit is a diverged and duplicated form of b found in plants and photosynthetic bacteria. This is ATP synthase subunit b' from Prochlorococcus marinus (strain MIT 9211).